The sequence spans 214 residues: dITP/XTP pyrophosphatase (214 aa).

13–18 contacts substrate; the sequence is SHNAGK. Asp45 and Asp74 together coordinate Mg(2+). The Proton acceptor role is filled by Asp74. Substrate is bound by residues Ser75, 163-166, Lys186, and 199-200; these read FGYD and HR.

Belongs to the HAM1 NTPase family. As to quaternary structure, homodimer. Mg(2+) is required as a cofactor.

The enzyme catalyses XTP + H2O = XMP + diphosphate + H(+). It carries out the reaction dITP + H2O = dIMP + diphosphate + H(+). The catalysed reaction is ITP + H2O = IMP + diphosphate + H(+). In terms of biological role, pyrophosphatase that catalyzes the hydrolysis of nucleoside triphosphates to their monophosphate derivatives, with a high preference for the non-canonical purine nucleotides XTP (xanthosine triphosphate), dITP (deoxyinosine triphosphate) and ITP. Seems to function as a house-cleaning enzyme that removes non-canonical purine nucleotides from the nucleotide pool, thus preventing their incorporation into DNA/RNA and avoiding chromosomal lesions. This Rhizobium meliloti (strain 1021) (Ensifer meliloti) protein is dITP/XTP pyrophosphatase.